Consider the following 163-residue polypeptide: Probable chemoreceptor glutamine deamidase CheD (163 aa).

Belongs to the CheD family.

It catalyses the reaction L-glutaminyl-[protein] + H2O = L-glutamyl-[protein] + NH4(+). Its function is as follows. Probably deamidates glutamine residues to glutamate on methyl-accepting chemotaxis receptors (MCPs), playing an important role in chemotaxis. This chain is Probable chemoreceptor glutamine deamidase CheD, found in Borrelia turicatae (strain 91E135).